The primary structure comprises 495 residues: Bifunctional protein GlmU (495 aa).

The pyrophosphorylase stretch occupies residues 1–241; that stretch reads MTFPGDTAVL…SALVAGVNNR (241 aa). Residues 12-15, Lys-26, Gln-83, 88-89, 112-114, Gly-151, Glu-166, Asn-181, and Asn-239 contribute to the UDP-N-acetyl-alpha-D-glucosamine site; these read LAAG, GT, and SGD. A Mg(2+)-binding site is contributed by Asp-114. A Mg(2+)-binding site is contributed by Asn-239. A linker region spans residues 242–262; sequence VQLAELASELNRRVVAAHQLA. The N-acetyltransferase stretch occupies residues 263–495; the sequence is GVTVVDPATT…TQPPDADQTP (233 aa). 2 residues coordinate UDP-N-acetyl-alpha-D-glucosamine: Arg-344 and Lys-362. His-374 serves as the catalytic Proton acceptor. Residues Tyr-377 and Asn-388 each contribute to the UDP-N-acetyl-alpha-D-glucosamine site. Residues Ala-391, 397–398, Ser-416, and Ala-434 contribute to the acetyl-CoA site; that span reads NY. The segment at 457–495 is disordered; the sequence is IENWVQRKRPGSPAAQASKRASEMACQQPTQPPDADQTP. The span at 483–495 shows a compositional bias: low complexity; sequence QQPTQPPDADQTP.

The protein in the N-terminal section; belongs to the N-acetylglucosamine-1-phosphate uridyltransferase family. This sequence in the C-terminal section; belongs to the transferase hexapeptide repeat family. In terms of assembly, homotrimer. It depends on Mg(2+) as a cofactor.

It is found in the cytoplasm. It catalyses the reaction alpha-D-glucosamine 1-phosphate + acetyl-CoA = N-acetyl-alpha-D-glucosamine 1-phosphate + CoA + H(+). The enzyme catalyses N-acetyl-alpha-D-glucosamine 1-phosphate + UTP + H(+) = UDP-N-acetyl-alpha-D-glucosamine + diphosphate. The protein operates within nucleotide-sugar biosynthesis; UDP-N-acetyl-alpha-D-glucosamine biosynthesis; N-acetyl-alpha-D-glucosamine 1-phosphate from alpha-D-glucosamine 6-phosphate (route II): step 2/2. Its pathway is nucleotide-sugar biosynthesis; UDP-N-acetyl-alpha-D-glucosamine biosynthesis; UDP-N-acetyl-alpha-D-glucosamine from N-acetyl-alpha-D-glucosamine 1-phosphate: step 1/1. It participates in bacterial outer membrane biogenesis; LPS lipid A biosynthesis. Functionally, catalyzes the last two sequential reactions in the de novo biosynthetic pathway for UDP-N-acetylglucosamine (UDP-GlcNAc). The C-terminal domain catalyzes the transfer of acetyl group from acetyl coenzyme A to glucosamine-1-phosphate (GlcN-1-P) to produce N-acetylglucosamine-1-phosphate (GlcNAc-1-P), which is converted into UDP-GlcNAc by the transfer of uridine 5-monophosphate (from uridine 5-triphosphate), a reaction catalyzed by the N-terminal domain. The protein is Bifunctional protein GlmU of Mycobacterium tuberculosis (strain ATCC 25177 / H37Ra).